The following is a 466-amino-acid chain: ATP synthase subunit beta, sodium ion specific (466 aa).

Position 153 to 160 (153 to 160 (GGAGVGKT)) interacts with ATP.

Belongs to the ATPase alpha/beta chains family. F-type ATPases have 2 components, CF(1) - the catalytic core - and CF(0) - the membrane proton channel. CF(1) has five subunits: alpha(3), beta(3), gamma(1), delta(1), epsilon(1). CF(0) has three main subunits: a, b and c.

It localises to the cell membrane. It carries out the reaction 4 Na(+)(in) + ATP + H2O = 4 Na(+)(out) + ADP + phosphate + H(+). Its activity is regulated as follows. Inhibited by nitrate. Its function is as follows. Produces ATP from ADP in the presence of a sodium ion gradient across the membrane. The beta chain is the catalytic subunit. The chain is ATP synthase subunit beta, sodium ion specific from Acetobacterium woodii (strain ATCC 29683 / DSM 1030 / JCM 2381 / KCTC 1655 / WB1).